A 234-amino-acid polypeptide reads, in one-letter code: MHLTPDQTIFWQWGLFSLNATLIFTWLVMGVLVVGSWFVTRHLSASTQISRGQNLLEVIVLGIRDQIQEIIDQPADPYLPFIGTLFIFIALSNLLSVIPGYQPPTGSLSTTTALALCVFFAVPLYGVQKKGVRGYLQQYLQPNPIMLPFNIIGDFSRIVALAVRLFGNVMSGTMIVGILLSVAPLFFPVMMQVLGLLTGVIQAYIFAILAMVFIAAASQVDQHNYQTDSEVSHG.

5 helical membrane passes run A20–T40, Y78–I98, S107–V127, V169–V189, and L194–I214.

This sequence belongs to the ATPase A chain family. F-type ATPases have 2 components, CF(1) - the catalytic core - and CF(0) - the membrane proton channel. CF(1) has five subunits: alpha(3), beta(3), gamma(1), delta(1), epsilon(1). CF(0) has four main subunits: a, b, b' and c.

It localises to the cellular thylakoid membrane. Functionally, key component of the proton channel; it plays a direct role in the translocation of protons across the membrane. The protein is ATP synthase subunit a 2 of Acaryochloris marina (strain MBIC 11017).